The following is a 311-amino-acid chain: Delta(1)-pyrroline-2-carboxylate/Delta(1)-piperideine-2-carboxylate reductase (311 aa).

The protein belongs to the ornithine cyclodeaminase/mu-crystallin family. In terms of assembly, homodimer.

The catalysed reaction is L-pipecolate + NAD(+) = Delta(1)-piperideine-2-carboxylate + NADH + H(+). The enzyme catalyses L-pipecolate + NADP(+) = Delta(1)-piperideine-2-carboxylate + NADPH + H(+). It catalyses the reaction L-proline + NAD(+) = 1-pyrroline-2-carboxylate + NADH + H(+). It carries out the reaction L-proline + NADP(+) = 1-pyrroline-2-carboxylate + NADPH + H(+). The protein operates within amino-acid degradation. Functionally, catalyzes the reduction of both Delta(1)-pyrroline-2-carboxylate (Pyr2C) and Delta(1)-piperideine-2-carboxylate (Pip2C) to L-proline and L-pipecolate, respectively, using NADPH or NADH as the electron donor. Can also catalyze the reverse oxidation reactions, albeit at a much lower rate. Together with LhpH, is involved in a trans-3-hydroxy-L-proline (t3LHyp) degradation pathway to L-proline, which allows A.brasilense to grow on t3LHyp as a sole carbon source. Also appears to be involved in D-proline and D-lysine metabolism. Does not show ornithine cyclodeaminase (OCD) activity. The sequence is that of Delta(1)-pyrroline-2-carboxylate/Delta(1)-piperideine-2-carboxylate reductase from Azospirillum brasilense.